We begin with the raw amino-acid sequence, 407 residues long: Nicotinate phosphoribosyltransferase (407 aa).

At His224 the chain carries Phosphohistidine; by autocatalysis.

Belongs to the NAPRTase family. Transiently phosphorylated on a His residue during the reaction cycle. Phosphorylation strongly increases the affinity for substrates and increases the rate of nicotinate D-ribonucleotide production. Dephosphorylation regenerates the low-affinity form of the enzyme, leading to product release.

The catalysed reaction is nicotinate + 5-phospho-alpha-D-ribose 1-diphosphate + ATP + H2O = nicotinate beta-D-ribonucleotide + ADP + phosphate + diphosphate. The protein operates within cofactor biosynthesis; NAD(+) biosynthesis; nicotinate D-ribonucleotide from nicotinate: step 1/1. Its function is as follows. Catalyzes the synthesis of beta-nicotinate D-ribonucleotide from nicotinate and 5-phospho-D-ribose 1-phosphate at the expense of ATP. This chain is Nicotinate phosphoribosyltransferase, found in Pseudomonas syringae pv. tomato (strain ATCC BAA-871 / DC3000).